The primary structure comprises 305 residues: MGRAPCCDKMAVKKGPWSTEEDAVLKSYIEKHGTGNNWISLPQRIGIKRCGKSCRLRWLNYLRPNLKHGGFTDEEDYIICSLYITIGSRWSIIASQLPGRTDNDIKNYWNTRLKKKLLSKQGKAFHQQLNVKFERGTTSSSSSQNQIQIFHDENTKSNQTLYNQVVDPSMRAFAMEEQSMIKNQILEPFSWEPNKVLFDVDYDAAASSYHHHASPSLNSMSSTSSIGTNNSSLQMSHYTVNHNDHDQPDMFFMDGFENFQAELFDEIANNNTVENGFDGTEILINNNYLDHDISSFIDYPLYDNE.

2 consecutive HTH myb-type domains span residues 9-66 (KMAV…RPNL) and 67-117 (KHGG…KKKL). 2 consecutive DNA-binding regions (H-T-H motif) follow at residues 38–62 (WISL…LNYL) and 90–113 (WSII…NTRL).

In terms of tissue distribution, expressed in roots, leaves, internodes, shoot tips and flowers.

It localises to the nucleus. In terms of biological role, transcription factor that functions as a regulator of genes affecting cell wall organization and remodeling. Activates genes related to the primary cell wall and represses genes related to the secondary cell wall and expansins. Required for the regulation of longitudinal cell growth in stems, leaves, petioles, roots, flowers and siliques. The chain is Transcription factor MYB87 from Arabidopsis thaliana (Mouse-ear cress).